A 489-amino-acid chain; its full sequence is Probable cytochrome P450 CYP44 (489 aa).

Residues 12–31 form a disordered region; sequence VEKCPYSPTSSPNTPPRTFS. The span at 16-29 shows a compositional bias: low complexity; the sequence is PYSPTSSPNTPPRT. Residue Cys438 participates in heme binding.

The protein belongs to the cytochrome P450 family. Heme is required as a cofactor.

Its function is as follows. Cytochromes P450 are a group of heme-thiolate monooxygenases. They oxidize a variety of structurally unrelated compounds, including steroids, fatty acids, and xenobiotics. The sequence is that of Probable cytochrome P450 CYP44 (cyp-44A1) from Caenorhabditis elegans.